A 149-amino-acid polypeptide reads, in one-letter code: Calmodulin-like protein (149 aa).

EF-hand domains lie at 6-41, 42-76, 78-113, and 113-148; these read TTQALYKEAFNLFDKDKDGKITIQELGIVMRSVGSN, PTQQELKDIAKEIDDGSGLVDFSKFSSLMTRKMKY, DSEADIKQAFKVFDKKGNGYANIQDLKHTLTSIGEK, and KLTKEEFDNMLKDAKTVDGQIHVDEFVRVIKSSKSF. Positions 19, 21, 23, 25, and 30 each coordinate Ca(2+).

This sequence belongs to the calmodulin family.

The protein resides in the contractile vacuole. In terms of biological role, mediates the control of a large number of enzymes, ion channels and other proteins by Ca(2+) ions. Among the enzymes to be stimulated by the calmodulin-Ca(2+) complex are a number of protein kinases and phosphatases. The sequence is that of Calmodulin-like protein (calB) from Dictyostelium discoideum (Social amoeba).